An 83-amino-acid polypeptide reads, in one-letter code: Cytochrome c-554(548) (83 aa).

Heme c-binding residues include Cys-14, Cys-17, His-18, and Met-63.

Homodimer. In terms of processing, binds 1 heme c group covalently per subunit.

The protein is Cytochrome c-554(548) of Halomonas halodenitrificans (strain ATCC 12084 / NCIMB 8669) (Paracoccus halodenitrificans).